Consider the following 110-residue polypeptide: UPF0122 protein SMU_1061 (110 aa).

Belongs to the UPF0122 family.

Its function is as follows. Might take part in the signal recognition particle (SRP) pathway. This is inferred from the conservation of its genetic proximity to ftsY/ffh. May be a regulatory protein. This chain is UPF0122 protein SMU_1061 (ylxM), found in Streptococcus mutans serotype c (strain ATCC 700610 / UA159).